The sequence spans 205 residues: Probable peptidyl-tRNA hydrolase 2 (205 aa).

A compositionally biased stretch (polar residues) spans 40–49 (YSSKNANKAS). The tract at residues 40 to 68 (YSSKNANKASNPEKESPVSVSNDEDSESE) is disordered. 2 positions are modified to phosphoserine: Ser-65 and Ser-79.

The protein belongs to the PTH2 family.

The enzyme catalyses an N-acyl-L-alpha-aminoacyl-tRNA + H2O = an N-acyl-L-amino acid + a tRNA + H(+). Functionally, the natural substrate for this enzyme may be peptidyl-tRNAs which drop off the ribosome during protein synthesis. This is Probable peptidyl-tRNA hydrolase 2 from Schizosaccharomyces pombe (strain 972 / ATCC 24843) (Fission yeast).